Consider the following 356-residue polypeptide: Solute carrier family 25 member 3 (356 aa).

The N-terminal 44 residues, 1 to 44, are a transit peptide targeting the mitochondrion; that stretch reads MFSSVAHLARANPFNAPHLQLVHDVSGPRSPPGPPRRSRHLAAA. Residues 45–57 are Mitochondrial intermembrane-facing; it reads AVEGYSCEFGSMK. Solcar repeat units follow at residues 57–141, 154–238, and 255–333; these read KYYA…FKAL, WRTS…TVEA, and EQLV…VKVY. A helical membrane pass occupies residues 58–80; the sequence is YYALCGFGGVLSCGLTHTAVVPL. At 81-115 the chain is on the mitochondrial matrix side; the sequence is DLVKCRMQVDPQKYKGIFNGFSITLKEDGVRGLAK. The residue at position 93 (Lys93) is an N6-acetyllysine. Lys106 carries the post-translational modification N6-methyllysine. The helical transmembrane segment at 116-135 threads the bilayer; it reads GWAPTLIGYSMQGLCKFGFY. Topologically, residues 136-155 are mitochondrial intermembrane; the sequence is EVFKALYSNILGEENTYLWR. The helical transmembrane segment at 156–177 threads the bilayer; it reads TSLYLAASASAEFFADIALAPM. Residues 178–212 lie on the Mitochondrial matrix side of the membrane; that stretch reads EAAKVRIQTQPGYANTLREAVPKMYKEEGLNAFYK. Phosphotyrosine is present on Tyr190. At Lys203 the chain carries N6-acetyllysine. The helical transmembrane segment at 213 to 232 threads the bilayer; sequence GVAPVWMRQIPYTMMKFACF. The Mitochondrial intermembrane portion of the chain corresponds to 233–255; that stretch reads ERTVEALYKFVVPKPRSECTKAE. Residues 256 to 278 traverse the membrane as a helical segment; it reads QLVVTFVAGYIAGVFCAIVSHPA. Residues 279–308 are Mitochondrial matrix-facing; the sequence is DSVVSVLNKEKGSTASQVLQRLGFRGVWKG. The helical transmembrane segment at 309–327 threads the bilayer; it reads LFARIIMIGTLTALQWFIY. Residues 328-356 are Mitochondrial intermembrane-facing; that stretch reads DSVKVYFRLPRPPPPEMPESLKKKLGLTE.

Belongs to the mitochondrial carrier (TC 2.A.29) family. Interacts with PPIF; the interaction is impaired by CsA.

The protein localises to the mitochondrion inner membrane. It catalyses the reaction phosphate(in) + H(+)(in) = phosphate(out) + H(+)(out). Its function is as follows. Inorganic ion transporter that transports phosphate or copper ions across the mitochondrial inner membrane into the matrix compartment. Mediates proton-coupled symport of phosphate ions necessary for mitochondrial oxidative phosphorylation of ADP to ATP. Transports copper ions probably in the form of anionic copper(I) complexes to maintain mitochondrial matrix copper pool and to supply copper for cytochrome C oxidase complex assembly. May also play a role in regulation of the mitochondrial permeability transition pore (mPTP). The sequence is that of Solute carrier family 25 member 3 from Rattus norvegicus (Rat).